Consider the following 178-residue polypeptide: ATP synthase subunit delta (178 aa).

It belongs to the ATPase delta chain family. In terms of assembly, F-type ATPases have 2 components, F(1) - the catalytic core - and F(0) - the membrane proton channel. F(1) has five subunits: alpha(3), beta(3), gamma(1), delta(1), epsilon(1). F(0) has three main subunits: a(1), b(2) and c(10-14). The alpha and beta chains form an alternating ring which encloses part of the gamma chain. F(1) is attached to F(0) by a central stalk formed by the gamma and epsilon chains, while a peripheral stalk is formed by the delta and b chains.

It localises to the cell membrane. In terms of biological role, f(1)F(0) ATP synthase produces ATP from ADP in the presence of a proton or sodium gradient. F-type ATPases consist of two structural domains, F(1) containing the extramembraneous catalytic core and F(0) containing the membrane proton channel, linked together by a central stalk and a peripheral stalk. During catalysis, ATP synthesis in the catalytic domain of F(1) is coupled via a rotary mechanism of the central stalk subunits to proton translocation. Functionally, this protein is part of the stalk that links CF(0) to CF(1). It either transmits conformational changes from CF(0) to CF(1) or is implicated in proton conduction. The polypeptide is ATP synthase subunit delta (Streptococcus equinus (Streptococcus bovis)).